Consider the following 367-residue polypeptide: Glutamate 5-kinase (367 aa).

Lys9 contributes to the ATP binding site. Residues Ser49, Asp136, and Asn148 each contribute to the substrate site. ATP-binding positions include 168–169 and 210–216; these read TD and TGGMKSK. The PUA domain occupies 276–350; it reads SGQIEVDAGA…GMQSQDIQVR (75 aa).

The protein belongs to the glutamate 5-kinase family.

Its subcellular location is the cytoplasm. It carries out the reaction L-glutamate + ATP = L-glutamyl 5-phosphate + ADP. Its pathway is amino-acid biosynthesis; L-proline biosynthesis; L-glutamate 5-semialdehyde from L-glutamate: step 1/2. In terms of biological role, catalyzes the transfer of a phosphate group to glutamate to form L-glutamate 5-phosphate. In Bacillus cereus (strain G9842), this protein is Glutamate 5-kinase.